The chain runs to 191 residues: Xanthine phosphoribosyltransferase (191 aa).

Residues Leu20 and Asn27 each contribute to the xanthine site. Residue Ala128–Ala132 participates in 5-phospho-alpha-D-ribose 1-diphosphate binding. Position 156 (Lys156) interacts with xanthine.

The protein belongs to the purine/pyrimidine phosphoribosyltransferase family. Xpt subfamily. In terms of assembly, homodimer.

Its subcellular location is the cytoplasm. The enzyme catalyses XMP + diphosphate = xanthine + 5-phospho-alpha-D-ribose 1-diphosphate. Its pathway is purine metabolism; XMP biosynthesis via salvage pathway; XMP from xanthine: step 1/1. In terms of biological role, converts the preformed base xanthine, a product of nucleic acid breakdown, to xanthosine 5'-monophosphate (XMP), so it can be reused for RNA or DNA synthesis. The sequence is that of Xanthine phosphoribosyltransferase from Limosilactobacillus reuteri (strain DSM 20016) (Lactobacillus reuteri).